The primary structure comprises 276 residues: Diaminopimelate epimerase (276 aa).

Substrate-binding residues include Asn13, Gln46, and Asn66. Cys75 acts as the Proton donor in catalysis. Residues Gly76–Asn77, Asn159, Asn192, and Glu210–Arg211 contribute to the substrate site. The active-site Proton acceptor is Cys219. Gly220 to Ser221 contributes to the substrate binding site.

This sequence belongs to the diaminopimelate epimerase family. As to quaternary structure, homodimer.

It is found in the cytoplasm. The catalysed reaction is (2S,6S)-2,6-diaminopimelate = meso-2,6-diaminopimelate. It functions in the pathway amino-acid biosynthesis; L-lysine biosynthesis via DAP pathway; DL-2,6-diaminopimelate from LL-2,6-diaminopimelate: step 1/1. Its function is as follows. Catalyzes the stereoinversion of LL-2,6-diaminopimelate (L,L-DAP) to meso-diaminopimelate (meso-DAP), a precursor of L-lysine and an essential component of the bacterial peptidoglycan. The chain is Diaminopimelate epimerase from Vibrio parahaemolyticus serotype O3:K6 (strain RIMD 2210633).